Consider the following 161-residue polypeptide: MPSFDIVSEIDRHELTNSVDQANRELEMRYDFRGVEASFTLSEKSVEMAAEQEFQLEQMLLILNTTLSKRKVDLRVLGDSTDQKSGKQVKRSYALKEGLEQKVAKDIVKKIKESKMKVQASIQGDQVRITGKKRDDLQEAIQLLRGDESLDVPMQFNNFRD.

The protein belongs to the YajQ family.

Functionally, nucleotide-binding protein. The polypeptide is Nucleotide-binding protein HCH_04620 (Hahella chejuensis (strain KCTC 2396)).